The sequence spans 360 residues: Protein-glutamate methylesterase/protein-glutamine glutaminase 3 (360 aa).

Residues arginine 14–glutamate 131 enclose the Response regulatory domain. At aspartate 65 the chain carries 4-aspartylphosphate. The 192-residue stretch at alanine 169–alanine 360 folds into the CheB-type methylesterase domain. Active-site residues include serine 181, histidine 207, and aspartate 303.

This sequence belongs to the CheB family. Phosphorylated by CheA. Phosphorylation of the N-terminal regulatory domain activates the methylesterase activity.

The protein localises to the cytoplasm. The catalysed reaction is [protein]-L-glutamate 5-O-methyl ester + H2O = L-glutamyl-[protein] + methanol + H(+). It carries out the reaction L-glutaminyl-[protein] + H2O = L-glutamyl-[protein] + NH4(+). Involved in chemotaxis. Part of a chemotaxis signal transduction system that modulates chemotaxis in response to various stimuli. Catalyzes the demethylation of specific methylglutamate residues introduced into the chemoreceptors (methyl-accepting chemotaxis proteins or MCP) by CheR. Also mediates the irreversible deamidation of specific glutamine residues to glutamic acid. The sequence is that of Protein-glutamate methylesterase/protein-glutamine glutaminase 3 from Burkholderia thailandensis (strain ATCC 700388 / DSM 13276 / CCUG 48851 / CIP 106301 / E264).